The sequence spans 151 residues: uncharacterized protein (151 aa).

The next 3 membrane-spanning stretches (helical) occupy residues 14 to 34 (GAALLDYIIVSVPLLLIYWLI), 45 to 65 (ISLVVLLYSILLPMFWRGYLI), and 91 to 111 (VIVAGLVYCITFGLGLIASLI).

It localises to the cell membrane. This is an uncharacterized protein from Bacillus subtilis (strain 168).